We begin with the raw amino-acid sequence, 125 residues long: Small ribosomal subunit protein uS13 (125 aa).

This sequence belongs to the universal ribosomal protein uS13 family. Part of the 30S ribosomal subunit. Forms a loose heterodimer with protein S19. Forms two bridges to the 50S subunit in the 70S ribosome.

Its function is as follows. Located at the top of the head of the 30S subunit, it contacts several helices of the 16S rRNA. In the 70S ribosome it contacts the 23S rRNA (bridge B1a) and protein L5 of the 50S subunit (bridge B1b), connecting the 2 subunits; these bridges are implicated in subunit movement. Contacts the tRNAs in the A and P-sites. The sequence is that of Small ribosomal subunit protein uS13 from Rickettsia africae (strain ESF-5).